The primary structure comprises 701 residues: Elongation factor G (701 aa).

The tr-type G domain maps to 11–287 (TKVRNIGIMA…AVIDYLPSPL (277 aa)). GTP-binding positions include 20 to 27 (AHIDAGKT), 84 to 88 (DTPGH), and 138 to 141 (NKMD).

The protein belongs to the TRAFAC class translation factor GTPase superfamily. Classic translation factor GTPase family. EF-G/EF-2 subfamily.

The protein resides in the cytoplasm. Its function is as follows. Catalyzes the GTP-dependent ribosomal translocation step during translation elongation. During this step, the ribosome changes from the pre-translocational (PRE) to the post-translocational (POST) state as the newly formed A-site-bound peptidyl-tRNA and P-site-bound deacylated tRNA move to the P and E sites, respectively. Catalyzes the coordinated movement of the two tRNA molecules, the mRNA and conformational changes in the ribosome. The protein is Elongation factor G of Mycobacterium ulcerans (strain Agy99).